The following is a 76-amino-acid chain: Dermaseptin-B4 (76 aa).

The signal sequence occupies residues 1–22; it reads MAFLKKSLFLVLFLGLVSLSIC. Positions 23–43 are excised as a propeptide; sequence EEEKRENKDEIEQEDDEQSEE. Glutamine amide is present on Gln-73. Positions 75 to 76 are excised as a propeptide; the sequence is EQ.

The protein belongs to the frog skin active peptide (FSAP) family. Dermaseptin subfamily. In terms of tissue distribution, expressed by the skin glands.

Its subcellular location is the secreted. Its function is as follows. Potent antimicrobial peptide with potent activity against Gram-positive and Gram-negative bacteria. Probably acts by disturbing membrane functions with its amphipathic structure. Has an activity of stimulation of insulin release, which may protect the species from being eaten by predators by causing fatal hypoglycemia. Has hemolytic activity. The sequence is that of Dermaseptin-B4 from Phyllomedusa bicolor (Two-colored leaf frog).